The chain runs to 101 residues: NAD(P)H-quinone oxidoreductase subunit 4L, chloroplastic (101 aa).

3 consecutive transmembrane segments (helical) span residues 2–22 (MLEY…YGLI), 32–52 (MCLE…SYFF), and 61–81 (IFSI…LAIV).

Belongs to the complex I subunit 4L family. NDH is composed of at least 16 different subunits, 5 of which are encoded in the nucleus.

It localises to the plastid. Its subcellular location is the chloroplast thylakoid membrane. The catalysed reaction is a plastoquinone + NADH + (n+1) H(+)(in) = a plastoquinol + NAD(+) + n H(+)(out). It carries out the reaction a plastoquinone + NADPH + (n+1) H(+)(in) = a plastoquinol + NADP(+) + n H(+)(out). Its function is as follows. NDH shuttles electrons from NAD(P)H:plastoquinone, via FMN and iron-sulfur (Fe-S) centers, to quinones in the photosynthetic chain and possibly in a chloroplast respiratory chain. The immediate electron acceptor for the enzyme in this species is believed to be plastoquinone. Couples the redox reaction to proton translocation, and thus conserves the redox energy in a proton gradient. The polypeptide is NAD(P)H-quinone oxidoreductase subunit 4L, chloroplastic (Ipomoea purpurea (Common morning glory)).